The chain runs to 314 residues: Glutathione synthetase (314 aa).

Residues 125-311 (EKLAAQLFPQ…IAGQLFDAIE (187 aa)) enclose the ATP-grasp domain. An ATP-binding site is contributed by 151 to 208 (FVQKQEQAILKPLDGMGGHSIFRSSNGDPNLNVILETLTDGGRTLAIAQRYLQQIIEG). Mg(2+)-binding residues include E282 and N284.

Belongs to the prokaryotic GSH synthase family. The cofactor is Mg(2+). Mn(2+) is required as a cofactor.

The enzyme catalyses gamma-L-glutamyl-L-cysteine + glycine + ATP = glutathione + ADP + phosphate + H(+). It participates in sulfur metabolism; glutathione biosynthesis; glutathione from L-cysteine and L-glutamate: step 2/2. This chain is Glutathione synthetase, found in Xylella fastidiosa (strain 9a5c).